We begin with the raw amino-acid sequence, 301 residues long: Large ribosomal subunit protein uL4 (301 aa).

The segment at 1-223 is large ribosomal subunit protein uL4; sequence MNETKTIDVL…TQALSAQPEV (223 aa). The interval 49 to 105 is disordered; that stretch reads QGTHATKTRGQVSGGGKKPWRQKGTGRARQGSTRAPQWVGGGTVHGPQPRSYAQRTP. The tract at residues 224 to 301 is unknown; that stretch reads PETNVADQHP…KSDSEKEDAK (78 aa).

This sequence belongs to the universal ribosomal protein uL4 family. As to quaternary structure, part of the 50S ribosomal subunit.

In terms of biological role, one of the primary rRNA binding proteins, this protein initially binds near the 5'-end of the 23S rRNA. It is important during the early stages of 50S assembly. It makes multiple contacts with different domains of the 23S rRNA in the assembled 50S subunit and ribosome. Forms part of the polypeptide exit tunnel. This chain is Large ribosomal subunit protein uL4, found in Cutibacterium acnes (strain DSM 16379 / KPA171202) (Propionibacterium acnes).